A 172-amino-acid chain; its full sequence is Achaete-scute homolog 4 (172 aa).

The bHLH domain maps to 72-124 (AFLRKRNERERQRVRCVNEGYARLRDHLPRELADKRLSKVETLRAAIDYIKHL). Positions 144 to 172 (QRRAECNSDGESKASSAPSPSSEPEEGGS) are disordered. A compositionally biased stretch (basic and acidic residues) spans 145 to 155 (RRAECNSDGES). Positions 156–165 (KASSAPSPSS) are enriched in low complexity.

In terms of tissue distribution, expressed in skin. 7-fold higher expression in fetal skin than in adult skin. Weak expression also detected in fetal lung, aorta and brain, and in adult stomach, kidney, ovary and breast.

It localises to the nucleus. Functionally, could be a transcriptional regulator involved in skin development. This chain is Achaete-scute homolog 4 (ASCL4), found in Homo sapiens (Human).